The sequence spans 268 residues: uncharacterized protein (268 aa).

The protein to yeast YKR075c.

This is an uncharacterized protein from Saccharomyces cerevisiae (strain ATCC 204508 / S288c) (Baker's yeast).